We begin with the raw amino-acid sequence, 70 residues long: U-actitoxin-Ael2c (70 aa).

The N-terminal stretch at 1 to 21 (SYQRFLFLVVVASLIATSLAI) is a signal peptide. A propeptide spanning residues 22–26 (PKDLE) is cleaved from the precursor. Cystine bridges form between cysteine 32/cysteine 65, cysteine 34/cysteine 58, and cysteine 48/cysteine 66.

It belongs to the sea anemone type 3 (BDS) potassium channel toxin family.

The protein resides in the secreted. It localises to the nematocyst. Functionally, potently and selectively inhibits voltage-gated potassium channels Kv11/KCNH/ERG. Acts as a gating-modifier toxin that shifts the voltage-dependence of ERG activation in the positive direction and suppresses its current amplitudes elicited by strong depolarizing pulses that maximally activate the channels. The chain is U-actitoxin-Ael2c from Anthopleura elegantissima (Green aggregating anemone).